A 400-amino-acid polypeptide reads, in one-letter code: Enoyl-[acyl-carrier-protein] reductase [NADH] (400 aa).

NAD(+)-binding positions include 48-53, 74-75, 111-112, and 139-140; these read GSSSGY, FE, DA, and LA. Substrate is bound at residue Tyr-225. Tyr-235 serves as the catalytic Proton donor. NAD(+)-binding positions include Lys-244 and 273–275; that span reads VVT.

This sequence belongs to the TER reductase family. In terms of assembly, monomer.

It catalyses the reaction a 2,3-saturated acyl-[ACP] + NAD(+) = a (2E)-enoyl-[ACP] + NADH + H(+). Its pathway is lipid metabolism; fatty acid biosynthesis. Its function is as follows. Involved in the final reduction of the elongation cycle of fatty acid synthesis (FAS II). Catalyzes the reduction of a carbon-carbon double bond in an enoyl moiety that is covalently linked to an acyl carrier protein (ACP). This is Enoyl-[acyl-carrier-protein] reductase [NADH] from Aliivibrio fischeri (strain MJ11) (Vibrio fischeri).